Here is a 433-residue protein sequence, read N- to C-terminus: Nuclear hormone receptor family member nhr-98 (433 aa).

The segment at residues 41-116 (SKKCQICENP…FGMTIDNFQF (76 aa)) is a DNA-binding region (nuclear receptor). NR C4-type zinc fingers lie at residues 44–64 (CQIC…CRAC) and 80–104 (CKTE…MQRC). An NR LBD domain is found at 177–433 (ETPYQVSNVL…CSHPGIFLNA (257 aa)).

This sequence belongs to the nuclear hormone receptor family.

It is found in the nucleus. In terms of biological role, orphan nuclear receptor. In Caenorhabditis elegans, this protein is Nuclear hormone receptor family member nhr-98 (nhr-98).